Reading from the N-terminus, the 825-residue chain is E3 ubiquitin-protein ligase ICP0 (825 aa).

Residues M1 to R10 show a composition bias toward polar residues. The segment at M1–G121 is disordered. Over residues D46–D57 the composition is skewed to acidic residues. An RING-type zinc finger spans residues C126–N167. Disordered regions lie at residues R221–P312, P325–G683, and R803–E825. Residues T242–D251 are compositionally biased toward acidic residues. Composition is skewed to low complexity over residues T273–R283, P290–G303, and P350–D367. Residues S368–P379 are compositionally biased toward pro residues. 2 stretches are compositionally biased toward low complexity: residues G380–S394 and P402–G439. Polar residues predominate over residues R456–S468. The span at G479–V491 shows a compositional bias: gly residues. Composition is skewed to low complexity over residues P492–A510 and D519–P540. Positions R552–H563 are enriched in basic and acidic residues. Residues A567–A641 show a composition bias toward low complexity. Positions G658–R667 are enriched in basic residues. Low complexity predominate over residues G811 to E825.

Post-translationally, auto-ubiquitinated.

The enzyme catalyses S-ubiquitinyl-[E2 ubiquitin-conjugating enzyme]-L-cysteine + [acceptor protein]-L-lysine = [E2 ubiquitin-conjugating enzyme]-L-cysteine + N(6)-ubiquitinyl-[acceptor protein]-L-lysine.. Functionally, evades nuclear antiviral defenses triggered by dsDNA viruses. Acts during the initial stages of lytic infection and the reactivation of latent viral genome. Prevents the antiviral effect of nuclear bodies by degrading host PML and SP100. Prevents antiviral response to viral DNA induced by IFI16 by degrading it. Additionally, inhibits host IRF3 nuclear signaling to prevent interferon production by the infected cells. In Homo sapiens (Human), this protein is E3 ubiquitin-protein ligase ICP0 (RL2).